We begin with the raw amino-acid sequence, 290 residues long: Probable protein phosphatase 2C 20 (290 aa).

Residues 31 to 278 (AHGYDFVKGK…DDISCIVPCF (248 aa)) form the PPM-type phosphatase domain. Mn(2+) contacts are provided by D68, G69, D230, and D269.

Belongs to the PP2C family. Mg(2+) is required as a cofactor. Mn(2+) serves as cofactor.

The enzyme catalyses O-phospho-L-seryl-[protein] + H2O = L-seryl-[protein] + phosphate. It carries out the reaction O-phospho-L-threonyl-[protein] + H2O = L-threonyl-[protein] + phosphate. Its function is as follows. May be involved in defense signaling. In Arabidopsis thaliana (Mouse-ear cress), this protein is Probable protein phosphatase 2C 20 (PPC3-1.2).